A 340-amino-acid polypeptide reads, in one-letter code: MKRIAVLTSGGDAPGMNAAIRAVVRKAISEGMEVYGINQGYYGMVTGDIFPLDANSVGDTINRGGTFLRSARYPEFAELEGQLKGIEQLKKHGIEGVVVIGGDGSYHGAMRLTEHGFPAVGLPGTIDNDIVGTDYTIGFDTAVATAVENLDRLRDTSASHNRTFVVEVMGRNAGDIALWSGIAAGADQIIVPEEEFNIDEVVSNVRAGYAAGKHHQIIVLAEGVMSGDEFAKTMKAAGDDSDLRVTNLGHLLRGGSPTARDRVLASRMGAYAVQLLKEGRGGLAVGVHNEEMVESPILGLAEEGALFSLTDEGKIVVNNPHKADLRLAALNRDLANQSSK.

Glycine 11 provides a ligand contact to ATP. 21–25 (RAVVR) contributes to the ADP binding site. ATP contacts are provided by residues 72-73 (RY) and 102-105 (GDGS). Mg(2+) is bound at residue aspartate 103. Residue 125-127 (TID) coordinates substrate. Aspartate 127 serves as the catalytic Proton acceptor. Arginine 154 provides a ligand contact to ADP. Substrate contacts are provided by residues arginine 162 and 169–171 (MGR). Residues 185–187 (GAD) and 213–215 (KHH) each bind ADP. Substrate-binding positions include glutamate 222, arginine 244, and 250–253 (HLLR).

This sequence belongs to the phosphofructokinase type A (PFKA) family. ATP-dependent PFK group I subfamily. Prokaryotic clade 'B1' sub-subfamily. In terms of assembly, homotetramer. The cofactor is Mg(2+).

It is found in the cytoplasm. It catalyses the reaction beta-D-fructose 6-phosphate + ATP = beta-D-fructose 1,6-bisphosphate + ADP + H(+). It participates in carbohydrate degradation; glycolysis; D-glyceraldehyde 3-phosphate and glycerone phosphate from D-glucose: step 3/4. Its activity is regulated as follows. Allosterically activated by ADP and other diphosphonucleosides, and allosterically inhibited by phosphoenolpyruvate. In terms of biological role, catalyzes the phosphorylation of D-fructose 6-phosphate to fructose 1,6-bisphosphate by ATP, the first committing step of glycolysis. In Streptococcus agalactiae serotype Ia (strain ATCC 27591 / A909 / CDC SS700), this protein is ATP-dependent 6-phosphofructokinase.